A 160-amino-acid polypeptide reads, in one-letter code: Large ribosomal subunit protein uL22c (160 aa).

This sequence belongs to the universal ribosomal protein uL22 family. In terms of assembly, part of the 50S ribosomal subunit.

The protein resides in the plastid. The protein localises to the chloroplast. Functionally, this protein binds specifically to 23S rRNA. In terms of biological role, the globular domain of the protein is located near the polypeptide exit tunnel on the outside of the subunit, while an extended beta-hairpin is found that lines the wall of the exit tunnel in the center of the 70S ribosome. This Lepidium virginicum (Virginia pepperweed) protein is Large ribosomal subunit protein uL22c (rpl22).